The sequence spans 508 residues: Photosystem II CP47 reaction center protein (508 aa).

6 helical membrane passes run 21–36 (AVHI…WAGS), 101–115 (IVFS…IWHW), 140–156 (GIHL…FGAF), 203–218 (IAAG…FHLS), 237–252 (VLSS…AFVV), and 457–472 (SFAL…HGAR).

This sequence belongs to the PsbB/PsbC family. PsbB subfamily. In terms of assembly, PSII is composed of 1 copy each of membrane proteins PsbA, PsbB, PsbC, PsbD, PsbE, PsbF, PsbH, PsbI, PsbJ, PsbK, PsbL, PsbM, PsbT, PsbX, PsbY, PsbZ, Psb30/Ycf12, at least 3 peripheral proteins of the oxygen-evolving complex and a large number of cofactors. It forms dimeric complexes. It depends on Binds multiple chlorophylls. PSII binds additional chlorophylls, carotenoids and specific lipids. as a cofactor.

The protein localises to the plastid. It localises to the chloroplast thylakoid membrane. Functionally, one of the components of the core complex of photosystem II (PSII). It binds chlorophyll and helps catalyze the primary light-induced photochemical processes of PSII. PSII is a light-driven water:plastoquinone oxidoreductase, using light energy to abstract electrons from H(2)O, generating O(2) and a proton gradient subsequently used for ATP formation. The sequence is that of Photosystem II CP47 reaction center protein from Buxus microphylla (Littleleaf boxwood).